The following is an 898-amino-acid chain: Sodium/hydrogen exchanger 5 (898 aa).

Residues 1 to 3 lie on the Cytoplasmic side of the membrane; that stretch reads MLR. The chain crosses the membrane as a helical span at residues 4–24; sequence VALLLLPGLPLAGVGATEEPT. Over 25–47 the chain is Extracellular; the sequence is QEPGPLGEPPGLALFRWQWHEVE. Residues 48–68 form a helical membrane-spanning segment; the sequence is APYLVALWILVASLAKIVFHL. Over 69-75 the chain is Cytoplasmic; that stretch reads SRKVTSL. Residues 76 to 96 traverse the membrane as a helical segment; that stretch reads VPESCLLILLGLALGGIVLAV. Residues 97–136 lie on the Extracellular side of the membrane; the sequence is AKKAEYQLEPGTFFLFLLPPIVLDSGYFMPSRLFFDNLGA. The chain crosses the membrane as a helical span at residues 137 to 157; sequence ILTYAVVGTLWNAFTTGVALW. At 158-175 the chain is on the cytoplasmic side; it reads GLQQAGLVAPRVQAGLLD. The chain crosses the membrane as a helical span at residues 176–196; it reads FLLFGSLISAVDPVAVLAVFE. Residues 197 to 202 lie on the Extracellular side of the membrane; that stretch reads EVHVNE. N201 is a glycosylation site (N-linked (GlcNAc...) asparagine). The helical transmembrane segment at 203 to 223 threads the bilayer; the sequence is TLFIIVFGESLLNDAVTVVLY. Topologically, residues 224–248 are cytoplasmic; it reads KVCNSFVEMGSANVQATDYLKGVAS. A helical membrane pass occupies residues 249–269; it reads LFVVSLGGAAVGLVFAFLLAL. Over 270–278 the chain is Extracellular; that stretch reads TTRFTKRVR. The chain crosses the membrane as a helical span at residues 279-299; it reads IIEPLLVFLLAYAAYLTAEMA. Residues 300-333 are Cytoplasmic-facing; it reads SLSAILAVTMCGLGCKKYVEANISHKSRTAVKYT. Residues 334 to 354 form a helical membrane-spanning segment; the sequence is MKTLASSAETVIFMLLGISAV. Residues 355 to 362 lie on the Extracellular side of the membrane; the sequence is DSSKWAWD. A helical transmembrane segment spans residues 363 to 383; sequence SGLVLGTLFFILFFRALGVVL. Residues 384–400 lie on the Cytoplasmic side of the membrane; sequence QTWVLNQFRLVPLDKID. A helical membrane pass occupies residues 401-421; sequence QVVMSYGGLRGAVAFALVILL. Topologically, residues 422–430 are extracellular; the sequence is DRTKVPAKD. The chain crosses the membrane as a helical span at residues 431–451; that stretch reads YFVATTIVVVFFTVIVQGLTI. The Cytoplasmic portion of the chain corresponds to 452 to 898; sequence KPLVKWLRVK…CIQFNRGGRL (447 aa). 2 disordered regions span residues 660–692 and 801–888; these read TKSK…RDLG and ESLA…NSHW. The segment covering 662–674 has biased composition (basic residues); it reads SKPRPRKTGHKKK. Over residues 856-867 the composition is skewed to polar residues; the sequence is ESSADIPQQQEL.

The protein belongs to the monovalent cation:proton antiporter 1 (CPA1) transporter (TC 2.A.36) family. Interacts with CHP1 and CHP2. Interacts with ARRB2; facilitates the endocytosis of SLC9A5 from the plasma membrane. Interacts with RACK1; this interaction positively regulates SLC9A5 activity and promotes SLC9A5 localization to focal adhesions. Interacts with SCAMP2; this interaction regulates SLC9A5 cell-surface targeting and SLC9A5 activity. Post-translationally, phosphorylated by PRKAA2; promotes its accumulation at the cell surface. Phosphorylated by CSNK2A1 in a manner favoring its beta-arrestin binding and endocytosis. In terms of tissue distribution, highly expressed in brain. Strongly expressed in the dentate gyrus.

The protein resides in the cell membrane. It localises to the recycling endosome membrane. The protein localises to the cell projection. Its subcellular location is the dendritic spine membrane. It is found in the synaptic cell membrane. The protein resides in the cell junction. It localises to the focal adhesion. It catalyses the reaction Na(+)(in) + H(+)(out) = Na(+)(out) + H(+)(in). Its function is as follows. Plasma membrane Na(+)/H(+) antiporter. Mediates the electroneutral exchange of intracellular H(+) ions for extracellular Na(+) in 1:1 stoichiometry. Responsible for regulating intracellular pH homeostasis, in particular in neural tissues. Acts as a negative regulator of dendritic spine growth. Plays a role in postsynaptic remodeling and signaling. Can also contribute to organellar pH regulation, with consequences for receptor tyrosine kinase trafficking. This chain is Sodium/hydrogen exchanger 5 (Slc9a5), found in Rattus norvegicus (Rat).